Consider the following 118-residue polypeptide: MARVKRGVIARKRHKKILKLAKGYYGARSRVFRVAKQAVIKAGQYAYRDRRQKKRQFRALWIARINAGARNNGLSYSRLIAGLKKASIEIDRKVLADLAVNEKAAFAAIVEKAKATLA.

It belongs to the bacterial ribosomal protein bL20 family.

Its function is as follows. Binds directly to 23S ribosomal RNA and is necessary for the in vitro assembly process of the 50S ribosomal subunit. It is not involved in the protein synthesizing functions of that subunit. The protein is Large ribosomal subunit protein bL20 of Pseudomonas fluorescens (strain ATCC BAA-477 / NRRL B-23932 / Pf-5).